The sequence spans 398 residues: O-methyltransferase mpaG (398 aa).

(4E,8E)-10-(4,6-dihydroxy-7-methyl-3-oxo-1,3-dihydro-2-benzofuran-5-yl)-4,8-dimethyldeca-4,8-dienoate is bound at residue serine 144. Serine 144 contributes to the 4-farnesyl-3,5-dihydroxy-6-methylphthalide binding site. Serine 144 provides a ligand contact to 6-O-desmethylmycophenolate. Asparagine 197 contributes to the S-adenosyl-L-homocysteine binding site. Tyrosine 199 is a (4E,8E)-10-(4,6-dihydroxy-7-methyl-3-oxo-1,3-dihydro-2-benzofuran-5-yl)-4,8-dimethyldeca-4,8-dienoate binding site. Tyrosine 199 lines the 4-farnesyl-3,5-dihydroxy-6-methylphthalide pocket. A 6-O-desmethylmycophenolate-binding site is contributed by tyrosine 199. Residues tyrosine 203, aspartate 237, glycine 239, histidine 244, aspartate 245, aspartate 264, and arginine 265 each coordinate S-adenosyl-L-homocysteine. Aspartate 264 is an S-adenosyl-L-methionine binding site. (4E,8E)-10-(4,6-dihydroxy-7-methyl-3-oxo-1,3-dihydro-2-benzofuran-5-yl)-4,8-dimethyldeca-4,8-dienoate contacts are provided by arginine 265 and glutamine 267. Arginine 265 contributes to the 6-O-desmethylmycophenolate binding site. Residues aspartate 286, isoleucine 287, and histidine 302 each contribute to the S-adenosyl-L-homocysteine site. Serine 303 is a (4E,8E)-10-(4,6-dihydroxy-7-methyl-3-oxo-1,3-dihydro-2-benzofuran-5-yl)-4,8-dimethyldeca-4,8-dienoate binding site. Serine 303 lines the 4-farnesyl-3,5-dihydroxy-6-methylphthalide pocket. Serine 303 provides a ligand contact to 6-O-desmethylmycophenolate. The active-site Proton acceptor is the histidine 306. Active-site residues include glutamate 335 and glutamate 362.

It belongs to the class I-like SAM-binding methyltransferase superfamily. Cation-independent O-methyltransferase family. COMT subfamily. Homodimer.

It is found in the cytoplasm. Its subcellular location is the cytosol. The enzyme catalyses (4E,8E)-10-(4,6-dihydroxy-7-methyl-3-oxo-1,3-dihydro-2-benzofuran-5-yl)-4,8-dimethyldeca-4,8-dienoate + S-adenosyl-L-methionine = (4E,8E)-10-(4-hydroxy-6-methoxy-7-methyl-3-oxo-1,3-dihydro-2-benzofuran-5-yl)-4,8-dimethyldeca-4,8-dienoate + S-adenosyl-L-homocysteine + H(+). It carries out the reaction 4-farnesyl-3,5-dihydroxy-6-methylphthalide + S-adenosyl-L-methionine = 4-farnesyl-3,5-dihydroxy-6-methoxylphthalide + S-adenosyl-L-homocysteine + H(+). It catalyses the reaction 6-O-desmethylmycophenolate + S-adenosyl-L-methionine = mycophenolate + S-adenosyl-L-homocysteine + H(+). Its pathway is secondary metabolite biosynthesis; terpenoid biosynthesis. In terms of biological role, O-methyltransferase; part of the gene cluster that mediates the biosynthesis of mycophenolic acid (MPA), the first isolated antibiotic natural product in the world obtained from a culture of Penicillium brevicompactum in 1893. MpaG methylates farnesyl-DHMP-3C (FDHMP-3C) to yield MFDHMP-3C. The first step of the pathway is the synthesis of 5-methylorsellinic acid (5MOA) by the cytosolic polyketide synthase mpaC. 5MOA is then converted to the phthalide compound 5,7-dihydroxy-4,6-dimethylphthalide (DHMP) by the endoplasmic reticulum-bound cytochrome P450 monooxygenase mpaDE. MpaDE first catalyzes hydroxylation of 5-MOA to 4,6-dihydroxy-2-(hydroxymethyl)-3-methylbenzoic acid (DHMB). MpaDE then acts as a lactone synthase that catalyzes the ring closure to convert DHMB into DHMP. The next step is the prenylation of DHMP by the Golgi apparatus-associated prenyltransferase mpaA to yield farnesyl-DHMP (FDHMP). The ER-bound oxygenase mpaB then mediates the oxidative cleavage the C19-C20 double bond in FDHMP to yield FDHMP-3C via a mycophenolic aldehyde intermediate. The O-methyltransferase mpaG catalyzes the methylation of FDHMP-3C to yield MFDHMP-3C. MpaG and mpaB can also switch the order in which they act and, in this case, the conversion of FDHMP to MFDHMP-3C can take place via 5-O-methyl-FDHMP (MFDHMP). After the cytosolic methylation of FDHMP-3C, MFDHMP-3C enters into peroxisomes probably via free diffusion due to its low molecular weight. Upon a peroxisomal CoA ligation reaction, catalyzed by a beta-oxidation component enzyme acyl-CoA ligase ACL891, MFDHMP-3C-CoA would then be restricted to peroxisomes for the following beta-oxidation pathway steps. The peroxisomal beta-oxidation machinery than converts MFDHMP-3C-CoA into MPA_CoA, via a beta-oxidation chain-shortening process. Finally mpaH acts as a peroxisomal acyl-CoA hydrolase with high substrate specificity toward MPA-CoA to release the final product MPA. MpaH can also hydrolyze DMMPA-CoA to release demethylmycophenolic acid (DMMPA) that is further converted to MPA by mpaG. In Penicillium brevicompactum, this protein is O-methyltransferase mpaG.